The primary structure comprises 266 residues: 15-hydroxyprostaglandin dehydrogenase [NAD(+)] (266 aa).

Residues 12–20 (GAAQGIGRA), 36–37 (DW), 63–65 (CDV), and Asn91 contribute to the NAD(+) site. Residues Ser138 and Gln148 each coordinate substrate. Tyr151 acts as the Proton acceptor in catalysis. Residues 151 to 155 (YCASK) and 186 to 188 (VDT) contribute to the NAD(+) site.

It belongs to the short-chain dehydrogenases/reductases (SDR) family. Homodimer.

The protein localises to the cytoplasm. The catalysed reaction is prostaglandin E2 + NAD(+) = 15-oxoprostaglandin E2 + NADH + H(+). The enzyme catalyses (15S)-hydroxy-(5Z,8Z,11Z,13E)-eicosatetraenoate + NAD(+) = 15-oxo-(5Z,8Z,11Z,13E)-eicosatetraenoate + NADH + H(+). It carries out the reaction (11R)-hydroxy-(5Z,8Z,12E,14Z)-eicosatetraenoate + NAD(+) = 11-oxo-(5Z,8Z,12E,14Z)-eicosatetraenoate + NADH + H(+). It catalyses the reaction lipoxin A4 + NAD(+) = 15-oxo-(5S,6R)-dihydroxy-(7E,9E,11Z,13E)-eicosatetraenoate + NADH + H(+). The catalysed reaction is 15-oxo-(5S,6R)-dihydroxy-(7E,9E,11Z)-eicosatrienoate + NADH + H(+) = (5S,6R,15S)-trihydroxy-(7E,9E,11Z)-eicosatrienoate + NAD(+). The enzyme catalyses prostaglandin A1 + NAD(+) = 15-oxo-prostaglandin A1 + NADH + H(+). It carries out the reaction prostaglandin E1 + NAD(+) = 15-oxoprostaglandin E1 + NADH + H(+). It catalyses the reaction 14-hydroxy-(4Z,7Z,10Z,12E,16Z,19Z)-docosahexaenoate + NAD(+) = 14-oxo-(4Z,7Z,10Z,12E,16Z,19Z)-docosahexaenoate + NADH + H(+). The catalysed reaction is resolvin E1 + NAD(+) = 18-oxo-resolvin E1 + NADH + H(+). The enzyme catalyses resolvin D1 + NAD(+) = 8-oxoresolvin D1 + NADH + H(+). It carries out the reaction resolvin D1 + NAD(+) = 17-oxoresolvin D1 + NADH + H(+). It catalyses the reaction resolvin D2 + NAD(+) = 7-oxoresolvin D2 + NADH + H(+). The catalysed reaction is resolvin D2 + NAD(+) = 16-oxoresolvin D2 + NADH + H(+). In terms of biological role, catalyzes the NAD-dependent dehydrogenation (oxidation) of a broad array of hydroxylated polyunsaturated fatty acids (mainly eicosanoids and docosanoids, including prostaglandins, lipoxins and resolvins), yielding their corresponding keto (oxo) metabolites. Decreases the levels of the pro-proliferative prostaglandins such as prostaglandin E2 (whose activity is increased in cancer because of an increase in the expression of cyclooxygenase 2) and generates oxo-fatty acid products that can profoundly influence cell function by abrogating pro-inflammatory cytokine expression. Converts resolvins E1, D1 and D2 to their oxo products, which represents a mode of resolvin inactivation. Resolvin E1 plays important roles during the resolution phase of acute inflammation, while resolvins D1 and D2 have a unique role in obesity-induced adipose inflammation. This is 15-hydroxyprostaglandin dehydrogenase [NAD(+)] (HPGD) from Bos taurus (Bovine).